A 382-amino-acid polypeptide reads, in one-letter code: Lipid-A-disaccharide synthase (382 aa).

This sequence belongs to the LpxB family.

It catalyses the reaction 2-N,3-O-bis[(3R)-3-hydroxytetradecanoyl]-alpha-D-glucosaminyl 1-phosphate + UDP-2-N,3-O-bis[(3R)-3-hydroxytetradecanoyl]-alpha-D-glucosamine = lipid A disaccharide (E. coli) + UDP + H(+). It carries out the reaction a lipid X + a UDP-2-N,3-O-bis[(3R)-3-hydroxyacyl]-alpha-D-glucosamine = a lipid A disaccharide + UDP + H(+). Its pathway is glycolipid biosynthesis; lipid IV(A) biosynthesis; lipid IV(A) from (3R)-3-hydroxytetradecanoyl-[acyl-carrier-protein] and UDP-N-acetyl-alpha-D-glucosamine: step 5/6. Condensation of UDP-2,3-diacylglucosamine and 2,3-diacylglucosamine-1-phosphate to form lipid A disaccharide, a precursor of lipid A, a phosphorylated glycolipid that anchors the lipopolysaccharide to the outer membrane of the cell. The protein is Lipid-A-disaccharide synthase of Shigella flexneri.